We begin with the raw amino-acid sequence, 157 residues long: Transcription initiation factor IIA large subunit (157 aa).

This sequence belongs to the TFIIA subunit 1 family. TFIIA is a heterodimer of the large subunit and the small subunit gamma.

It localises to the nucleus. In terms of biological role, TFIIA is a component of the transcription machinery of RNA polymerase II and plays an important role in transcriptional activation. The protein is Transcription initiation factor IIA large subunit (TOA1) of Encephalitozoon cuniculi (strain GB-M1) (Microsporidian parasite).